A 238-amino-acid chain; its full sequence is NAD(P)H-hydrate epimerase (238 aa).

One can recognise a YjeF N-terminal domain in the interval 10-225; that stretch reads AIKVDQILFN…ALQRQYELNL (216 aa). 68 to 72 contacts (6S)-NADPHX; sequence NNGGD. K(+) contacts are provided by N69 and D133. Residues 137–143 and D166 contribute to the (6S)-NADPHX site; that span reads GFSFKPP. Residue S169 participates in K(+) binding.

Belongs to the NnrE/AIBP family. The cofactor is K(+).

The catalysed reaction is (6R)-NADHX = (6S)-NADHX. It carries out the reaction (6R)-NADPHX = (6S)-NADPHX. Catalyzes the epimerization of the S- and R-forms of NAD(P)HX, a damaged form of NAD(P)H that is a result of enzymatic or heat-dependent hydration. This is a prerequisite for the S-specific NAD(P)H-hydrate dehydratase to allow the repair of both epimers of NAD(P)HX. The chain is NAD(P)H-hydrate epimerase from Drosophila willistoni (Fruit fly).